The sequence spans 183 residues: Small ribosomal subunit protein eS10z (183 aa).

Residues 91 to 183 (LKKSARPPGR…GAGPTSSSME (93 aa)) are disordered. A compositionally biased stretch (basic and acidic residues) spans 109 to 130 (DRPRGPPRFEGDRPRFGDRDGY). 2 stretches are compositionally biased toward gly residues: residues 131 to 146 (RGGP…GEKG) and 161 to 175 (GRPG…GFGA).

It belongs to the eukaryotic ribosomal protein eS10 family.

The protein localises to the cytoplasm. The polypeptide is Small ribosomal subunit protein eS10z (Oryza sativa subsp. japonica (Rice)).